We begin with the raw amino-acid sequence, 270 residues long: G-box-binding factor 4 (270 aa).

The segment at 1-46 (MASFKLMSSSNSDLSRRNSSSASSSPSIRSSHHLRPNPHADHSRIS) is disordered. Positions 8-29 (SSSNSDLSRRNSSSASSSPSIR) are enriched in low complexity. At S27 the chain carries Phosphoserine. Positions 187 to 250 (AAQRQKRMIK…YKKLMEVLIP (64 aa)) constitute a bZIP domain. Residues 190-208 (RQKRMIKNRESAARSRERK) are basic motif. The leucine-zipper stretch occupies residues 215 to 229 (LETLAAKLEEENEQL). Residues 250–270 (PVDEKPRPPSRPLSRSHSLEW) form a disordered region. Residues 261–270 (PLSRSHSLEW) show a composition bias toward low complexity.

It belongs to the bZIP family. As to quaternary structure, DNA-binding heterodimer with GBF2 and GBF3; non DNA-binding homodimer.

The protein localises to the nucleus. Binds to the G-box motif (5'-CCACGTGG-3') of the rbcS-1A gene promoter. G-box and G-box-like motifs are cis-acting elements defined in promoters of certain plant genes which are regulated by such diverse stimuli as light-induction or hormone control. In Arabidopsis thaliana (Mouse-ear cress), this protein is G-box-binding factor 4 (GBF4).